The chain runs to 387 residues: Protein-glutamate methylesterase/protein-glutamine glutaminase 2 (387 aa).

A Response regulatory domain is found at 4 to 121 (KVLVVDDSGF…SRNPQKVKQL (118 aa)). The residue at position 55 (Asp-55) is a 4-aspartylphosphate. Over residues 148–183 (AAPAAPTSSSRAPAPTTAPARAVPTRTAAPATAPAA) the composition is skewed to low complexity. Positions 148–199 (AAPAAPTSSSRAPAPTTAPARAVPTRTAAPATAPAAHAHHAPAHPTTSGTPK) are disordered. One can recognise a CheB-type methylesterase domain in the interval 192–384 (PTTSGTPKRK…LDDIGRHLVE (193 aa)). Catalysis depends on residues Ser-211, His-238, and Asp-331.

The protein belongs to the CheB family. In terms of processing, phosphorylated by CheA. Phosphorylation of the N-terminal regulatory domain activates the methylesterase activity.

The protein resides in the cytoplasm. The catalysed reaction is [protein]-L-glutamate 5-O-methyl ester + H2O = L-glutamyl-[protein] + methanol + H(+). The enzyme catalyses L-glutaminyl-[protein] + H2O = L-glutamyl-[protein] + NH4(+). Functionally, involved in chemotaxis. Part of a chemotaxis signal transduction system that modulates chemotaxis in response to various stimuli. Catalyzes the demethylation of specific methylglutamate residues introduced into the chemoreceptors (methyl-accepting chemotaxis proteins or MCP) by CheR. Also mediates the irreversible deamidation of specific glutamine residues to glutamic acid. The protein is Protein-glutamate methylesterase/protein-glutamine glutaminase 2 of Pseudomonas savastanoi pv. phaseolicola (strain 1448A / Race 6) (Pseudomonas syringae pv. phaseolicola (strain 1448A / Race 6)).